Here is a 202-residue protein sequence, read N- to C-terminus: Large ribosomal subunit protein uL4 (202 aa).

Positions 42-52 (GTKAQKSRSQV) are enriched in polar residues. Positions 42-70 (GTKAQKSRSQVSGTTKKSKKQKGGGARHG) are disordered.

This sequence belongs to the universal ribosomal protein uL4 family. In terms of assembly, part of the 50S ribosomal subunit.

In terms of biological role, one of the primary rRNA binding proteins, this protein initially binds near the 5'-end of the 23S rRNA. It is important during the early stages of 50S assembly. It makes multiple contacts with different domains of the 23S rRNA in the assembled 50S subunit and ribosome. Forms part of the polypeptide exit tunnel. The polypeptide is Large ribosomal subunit protein uL4 (Xylella fastidiosa (strain Temecula1 / ATCC 700964)).